The primary structure comprises 117 residues: Bomanin Bicipital 1 (117 aa).

The first 20 residues, 1 to 20 (MKCLILSFAIFVVLASQATA), serve as a signal peptide directing secretion. 2 disulfide bridges follow: Cys-29-Cys-32 and Cys-107-Cys-110.

Belongs to the bomanin family. Hemolymph (at protein level).

The protein localises to the secreted. In terms of biological role, secreted immune-induced peptide induced by Toll signaling. Has a role in resistance to bacterial and fungal infections. The protein is Bomanin Bicipital 1 of Drosophila melanogaster (Fruit fly).